Here is a 956-residue protein sequence, read N- to C-terminus: Kinesin heavy chain isoform 5C (956 aa).

A Kinesin motor domain is found at 8–327; that stretch reads SIKVMCRFRP…LMFGQRAKTI (320 aa). Residues Gln87, Ser89, Ser90, Gly91, Lys92, Thr93, His94, and Lys99 each coordinate ATP. The tract at residues 174 to 315 is microtubule-binding; the sequence is VSSPEEVMDV…PSVFNEAETK (142 aa). A Phosphothreonine modification is found at Thr403. The stretch at 406–923 forms a coiled coil; the sequence is VDGISAEKEK…RRAHSAQIAK (518 aa). The tract at residues 859 to 956 is globular; sequence CELPKLEKRL…GSSNSTHYQK (98 aa). The interval 910 to 956 is disordered; it reads KNMARRAHSAQIAKPIRPGHYPASSPTAVHAVRGGGGGSSNSTHYQK.

This sequence belongs to the TRAFAC class myosin-kinesin ATPase superfamily. Kinesin family. Kinesin subfamily. Oligomer composed of two heavy chains and two light chains. Interacts with GRIP1. Interacts with KLC3 and TRAK1. Interacts with ZFYVE27.

The protein localises to the cytoplasm. Its subcellular location is the cytoskeleton. It is found in the cell projection. The protein resides in the dendrite. It carries out the reaction ATP + H2O = ADP + phosphate + H(+). In terms of biological role, microtubule-associated force-producing protein that may play a role in organelle transport. Has ATPase activity. Involved in synaptic transmission. Mediates dendritic trafficking of mRNAs. Required for anterograde axonal transportation of MAPK8IP3/JIP3 which is essential for MAPK8IP3/JIP3 function in axon elongation. The polypeptide is Kinesin heavy chain isoform 5C (Kif5c) (Mus musculus (Mouse)).